The primary structure comprises 287 residues: Lipoyl synthase (287 aa).

[4Fe-4S] cluster is bound by residues cysteine 38, cysteine 43, cysteine 49, cysteine 64, cysteine 68, cysteine 71, and serine 277. The Radical SAM core domain maps to 50-266 (WSRGTATFLL…KTVAESLGLR (217 aa)).

Belongs to the radical SAM superfamily. Lipoyl synthase family. The cofactor is [4Fe-4S] cluster.

The protein resides in the cytoplasm. It catalyses the reaction [[Fe-S] cluster scaffold protein carrying a second [4Fe-4S](2+) cluster] + N(6)-octanoyl-L-lysyl-[protein] + 2 oxidized [2Fe-2S]-[ferredoxin] + 2 S-adenosyl-L-methionine + 4 H(+) = [[Fe-S] cluster scaffold protein] + N(6)-[(R)-dihydrolipoyl]-L-lysyl-[protein] + 4 Fe(3+) + 2 hydrogen sulfide + 2 5'-deoxyadenosine + 2 L-methionine + 2 reduced [2Fe-2S]-[ferredoxin]. The protein operates within protein modification; protein lipoylation via endogenous pathway; protein N(6)-(lipoyl)lysine from octanoyl-[acyl-carrier-protein]: step 2/2. In terms of biological role, catalyzes the radical-mediated insertion of two sulfur atoms into the C-6 and C-8 positions of the octanoyl moiety bound to the lipoyl domains of lipoate-dependent enzymes, thereby converting the octanoylated domains into lipoylated derivatives. The chain is Lipoyl synthase from Chlorobium phaeobacteroides (strain DSM 266 / SMG 266 / 2430).